The sequence spans 198 residues: Peroxiredoxin-2 (198 aa).

At alanine 2 the chain carries N-acetylalanine. The region spanning 6–164 (AHIGKPAPDF…ALRLVQAFQY (159 aa)) is the Thioredoxin domain. The active-site Cysteine sulfenic acid (-SOH) intermediate is the cysteine 51. A Phosphoserine modification is found at serine 112. Phosphothreonine is present on threonine 182. Residue lysine 196 is modified to N6-acetyllysine.

The protein belongs to the peroxiredoxin family. AhpC/Prx1 subfamily. As to quaternary structure, homodimer; disulfide-linked, upon oxidation. 5 homodimers assemble to form a ring-like decamer. Interacts with TIPIN. The enzyme can be inactivated by further oxidation of the cysteine sulfenic acid (C(P)-SOH) to sulphinic acid (C(P)-SO2H) instead of its condensation to a disulfide bond. It can be reactivated by forming a transient disulfide bond with sulfiredoxin SRXN1, which reduces the cysteine sulfinic acid in an ATP- and Mg-dependent manner. In terms of processing, acetylation increases resistance to transition to high molecular-mass complexes. Deacetylated by HDAC6 which decreases reducing activity.

The protein resides in the cytoplasm. It carries out the reaction a hydroperoxide + [thioredoxin]-dithiol = an alcohol + [thioredoxin]-disulfide + H2O. Its function is as follows. Thiol-specific peroxidase that catalyzes the reduction of hydrogen peroxide and organic hydroperoxides to water and alcohols, respectively. Plays a role in cell protection against oxidative stress by detoxifying peroxides and as sensor of hydrogen peroxide-mediated signaling events. Might participate in the signaling cascades of growth factors and tumor necrosis factor-alpha by regulating the intracellular concentrations of H(2)O(2). This is Peroxiredoxin-2 (Prdx2) from Rattus norvegicus (Rat).